We begin with the raw amino-acid sequence, 462 residues long: Keratin, type I cytoskeletal 28 (462 aa).

The disordered stretch occupies residues 1-26; sequence MSLRFSGGSRHVGIQSGSLRPPSGGA. The head stretch occupies residues 1–83; that stretch reads MSLRFSGGSR…GSEGGLLSGN (83 aa). Residues 84 to 119 form a coil 1A region; it reads EKVTMQNLNNRLASYLDNVKALEEANSELERKIKTW. The 316-residue stretch at 84-399 folds into the IF rod domain; it reads EKVTMQNLNN…RLIDGDENSC (316 aa). Positions 120–141 are linker 1; that stretch reads HEKYGPGSCRGLDRDYSKYHLT. Positions 142-233 are coil 1B; sequence IEDLKSKIIS…KNHEEEMKVL (92 aa). The interval 234 to 256 is linker 12; that stretch reads QCAAGGNVNVEMNAAPGVDLTVL. A coil 2 region spans residues 257–395; it reads LNNMRAEYEA…ETYCRLIDGD (139 aa). The interval 396–462 is tail; that stretch reads ENSCSVSKGF…NGKAEQRVPF (67 aa).

Belongs to the intermediate filament family. As to quaternary structure, heterotetramer of two type I and two type II keratins. In terms of tissue distribution, in the hair follicle and bulb, uniformly expressed in all three layers of the inner root sheath (the Henle layer, the Huxley layer and the cuticle) and observed in matrix cells (at protein level).

Its subcellular location is the cytoplasm. Its function is as follows. Essential for the proper assembly of types I and II keratin protein complexes and the formation of keratin intermediate filaments in the inner root sheath (irs). In Mus musculus (Mouse), this protein is Keratin, type I cytoskeletal 28.